The sequence spans 556 residues: ATP synthase subunit beta-1, mitochondrial (556 aa).

The segment covering 1–20 has biased composition (low complexity); sequence MASRRVLSSLLRSSSGRSAA. A disordered region spans residues 1–37; it reads MASRRVLSSLLRSSSGRSAAKLGNRNPRLPSPSPARH. The N-terminal 51 residues, 1-51, are a transit peptide targeting the mitochondrion; sequence MASRRVLSSLLRSSSGRSAAKLGNRNPRLPSPSPARHAAPCSYLLGRVAEY. The residue at position 59 (Ser-59) is a Phosphoserine. 231–238 is an ATP binding site; the sequence is GGAGVGKT.

It belongs to the ATPase alpha/beta chains family. F-type ATPases have 2 components, CF(1) - the catalytic core - and CF(0) - the membrane proton channel. CF(1) has five subunits: alpha(3), beta(3), gamma(1), delta(1), epsilon(1). CF(0) has three main subunits: a, b and c.

It localises to the mitochondrion. Its subcellular location is the mitochondrion inner membrane. The enzyme catalyses ATP + H2O + 4 H(+)(in) = ADP + phosphate + 5 H(+)(out). Mitochondrial membrane ATP synthase (F(1)F(0) ATP synthase or Complex V) produces ATP from ADP in the presence of a proton gradient across the membrane which is generated by electron transport complexes of the respiratory chain. F-type ATPases consist of two structural domains, F(1) - containing the extramembraneous catalytic core, and F(0) - containing the membrane proton channel, linked together by a central stalk and a peripheral stalk. During catalysis, ATP synthesis in the catalytic domain of F(1) is coupled via a rotary mechanism of the central stalk subunits to proton translocation. Subunits alpha and beta form the catalytic core in F(1). Rotation of the central stalk against the surrounding alpha(3)beta(3) subunits leads to hydrolysis of ATP in three separate catalytic sites on the beta subunits. The protein is ATP synthase subunit beta-1, mitochondrial of Arabidopsis thaliana (Mouse-ear cress).